The sequence spans 999 residues: Probable beta-galactosidase C (999 aa).

Residues Met1–Ala21 form the signal peptide. Asn25 is a glycosylation site (N-linked (GlcNAc...) asparagine). 4 residues coordinate substrate: Tyr80, Asn125, Glu127, and Asn185. The Proton donor role is filled by Glu186. Asn195 carries an N-linked (GlcNAc...) asparagine glycan. Tyr249 is a substrate binding site. Cys255 and Cys302 are joined by a disulfide. Asn274 carries an N-linked (GlcNAc...) asparagine glycan. Glu285 (nucleophile) is an active-site residue. A substrate-binding site is contributed by Tyr351. 10 N-linked (GlcNAc...) asparagine glycosylation sites follow: Asn389, Asn441, Asn512, Asn519, Asn600, Asn675, Asn713, Asn757, Asn808, and Asn897.

This sequence belongs to the glycosyl hydrolase 35 family.

The protein localises to the secreted. The enzyme catalyses Hydrolysis of terminal non-reducing beta-D-galactose residues in beta-D-galactosides.. In terms of biological role, cleaves beta-linked terminal galactosyl residues from gangliosides, glycoproteins, and glycosaminoglycans. This is Probable beta-galactosidase C (lacC) from Talaromyces marneffei (strain ATCC 18224 / CBS 334.59 / QM 7333) (Penicillium marneffei).